The sequence spans 605 residues: Aspartate--tRNA(Asp/Asn) ligase (605 aa).

Residue Glu-172 coordinates L-aspartate. The interval 196–199 (QLFK) is aspartate. Residue Arg-218 coordinates L-aspartate. ATP contacts are provided by residues 218–220 (RDE) and Gln-227. His-455 serves as a coordination point for L-aspartate. An ATP-binding site is contributed by Glu-489. L-aspartate is bound at residue Arg-496. 541–544 (GLDR) contributes to the ATP binding site.

It belongs to the class-II aminoacyl-tRNA synthetase family. Type 1 subfamily. Homodimer.

Its subcellular location is the cytoplasm. The enzyme catalyses tRNA(Asx) + L-aspartate + ATP = L-aspartyl-tRNA(Asx) + AMP + diphosphate. Aspartyl-tRNA synthetase with relaxed tRNA specificity since it is able to aspartylate not only its cognate tRNA(Asp) but also tRNA(Asn). Reaction proceeds in two steps: L-aspartate is first activated by ATP to form Asp-AMP and then transferred to the acceptor end of tRNA(Asp/Asn). This is Aspartate--tRNA(Asp/Asn) ligase from Ralstonia nicotianae (strain ATCC BAA-1114 / GMI1000) (Ralstonia solanacearum).